The sequence spans 87 residues: uncharacterized protein (87 aa).

The protein belongs to the SF3B5 family.

This is an uncharacterized protein from Arabidopsis thaliana (Mouse-ear cress).